The primary structure comprises 478 residues: Spindle defective protein 3 (478 aa).

Residues 1–24 (MDQMTVEEKILEHQELEDGSSSFR) lie on the Cytoplasmic side of the membrane. A helical membrane pass occupies residues 25–45 (WLVSSTVIAIGGATVALYISG). The Extracellular portion of the chain corresponds to 46-52 (KIDWKIP). Residues 53–73 (AIEAGLALTAGGTITCGYLWF) form a helical membrane-spanning segment. Residues 74 to 478 (KKRVKTVRKL…LRRVDDDIIE (405 aa)) lie on the Cytoplasmic side of the membrane.

It is found in the mitochondrion. It localises to the mitochondrion outer membrane. Its function is as follows. In the first mitotic division in embryos, required for mitotic spindle alignment and asymmetric cell division. Required for motor-driven chromosome movement and homolog searching within the nucleus, and subsequently ensures homologous chromosome pairing during the prophase stage of meiosis. In Caenorhabditis elegans, this protein is Spindle defective protein 3.